The sequence spans 632 residues: MTHEFTESYDVIVIGAGHAGVEASLATSRMGCKTLLATINLDMLAFMPCNPSIGGSAKGIVVREIDALGGEMGKNIDKTYIQMKMLNTGKGPAVRALRAQADKSLYAREMKHTVEKQANLTLRQTMIDDILVEDGRVVGVLTATGQKFAAKAVVVTTGTALRGEIILGELKYSSGPNNSLASVTLADNLKKLGLEIGRFKTGTPPRVKASSINYDQTEIQPGDDKPNHFSFMSKDAEYLKDQIPCWLTYTNQTSHDIINQNLYRAPMFSGIVKGVGPRYCPSIEDKIVRFADKERHQLFLEPEGRDTEEVYVQGLSTSLPEDVQKDLIHSIKGLEKAEMMRTGYAIEYDIVLPHQLRATLETKLISGLFTAGQTNGTSGYEEAAGQGLIAGINAALKVQGKPELILKRSDAYIGVMIDDLVTKGTLEPYRLLTSRAEYRLILRHDNADMRLTEIGRDIGLVDDERWKAFEIKKNQFDNELKRLNSIKLKPVKATNDRVQELGFKPLTDAMTAKEFMRRPEIDYATAVSFVGPAAEDLDAKIIELLETEIKYEGYIRKALDQVAKMKRMEEKRIPANIDWDAIDSIATEARQKFKKINPETIGQASRISGVNPADISILMIYLEGNGKAHRKY.

Residues 15-20 (GAGHAG), I127, and S182 each bind FAD. 276–290 (GPRYCPSIEDKIVRF) provides a ligand contact to NAD(+). An FAD-binding site is contributed by Q373.

This sequence belongs to the MnmG family. As to quaternary structure, homodimer. Heterotetramer of two MnmE and two MnmG subunits. The cofactor is FAD.

The protein resides in the cytoplasm. Its function is as follows. NAD-binding protein involved in the addition of a carboxymethylaminomethyl (cmnm) group at the wobble position (U34) of certain tRNAs, forming tRNA-cmnm(5)s(2)U34. This chain is tRNA uridine 5-carboxymethylaminomethyl modification enzyme MnmG, found in Streptococcus pyogenes serotype M28 (strain MGAS6180).